Consider the following 170-residue polypeptide: MQNRTGLILCALALLMGFLMVCLGAFFISWGSIFDCQGSLIAAYLLLPLGFVILLSGIFWSNYRQVTESKGVLRHMLRQHLAHGALSVATVDRPDFYPPAYEESLEVEKQSCPAEREASGIPPPLYTETGLEFQDGNDSHPEAPPSYRESIASLVVTAISEDAQRRGQEC.

The next 2 membrane-spanning stretches (helical) occupy residues 8 to 28 (ILCA…AFFI) and 40 to 60 (LIAA…GIFW). The segment at 112–147 (CPAEREASGIPPPLYTETGLEFQDGNDSHPEAPPSY) is disordered.

The protein localises to the membrane. The chain is Transmembrane protein 252 (TMEM252) from Pongo abelii (Sumatran orangutan).